A 794-amino-acid chain; its full sequence is Protein SEY1 (794 aa).

Residues 1–687 (MMEVIDSVLG…KRSIIKTTTA (687 aa)) lie on the Cytoplasmic side of the membrane. The 230-residue stretch at 43-272 (GLDYHVISVF…ANPYYFKPQY (230 aa)) folds into the GB1/RHD3-type G domain. 53–60 (GSQSSGKS) is a GTP binding site. Residues 331-352 (VDHILDDREKLGEVLKNLKQEC) adopt a coiled-coil conformation. Residues 688–708 (IPIWMYLLVVALGWNEFVMVL) traverse the membrane as a helical segment. At 709-711 (RNP) the chain is on the lumenal side. A helical transmembrane segment spans residues 712–732 (LLVTLVLLFGVGFIFVNKFGL). Residues 733–794 (WGPVLNVAHN…SDNEKIEKSE (62 aa)) lie on the Cytoplasmic side of the membrane. Positions 770–794 (NSAGKESYEMKDMSDSDNEKIEKSE) are disordered. The span at 775–794 (ESYEMKDMSDSDNEKIEKSE) shows a compositional bias: basic and acidic residues.

This sequence belongs to the TRAFAC class dynamin-like GTPase superfamily. GB1/RHD3 GTPase family. RHD3 subfamily.

Its subcellular location is the endoplasmic reticulum membrane. Cooperates with the reticulon proteins and tubule-shaping DP1 family proteins to generate and maintain the structure of the tubular endoplasmic reticulum network. Has GTPase activity, which is required for its function in ER organization. The polypeptide is Protein SEY1 (Zygosaccharomyces rouxii (strain ATCC 2623 / CBS 732 / NBRC 1130 / NCYC 568 / NRRL Y-229)).